Here is a 980-residue protein sequence, read N- to C-terminus: Macrophage colony-stimulating factor 1 receptor (980 aa).

Residues 1–19 (MGPRALLVLLVATAWHAQG) form the signal peptide. Over 20 to 514 (VPVIQPSGPE…QLPDELLFTP (495 aa)) the chain is Extracellular. Ig-like C2-type domains follow at residues 21–100 (PVIQ…IHLY), 107–197 (PWKV…KVQK), 202–297 (PATL…RVVE), 299–397 (AYLN…LTLR), and 400–499 (PEVR…WPIS). An intrachain disulfide couples Cys42 to Cys84. N-linked (GlcNAc...) asparagine glycans are attached at residues Asn45, Asn73, Asn94, Asn153, Asn275, Asn286, Asn302, Asn335, Asn410, Asn477, and Asn490. 2 disulfides stabilise this stretch: Cys127/Cys177 and Cys224/Cys278. A disulfide bridge connects residues Cys417 and Cys482. The helical transmembrane segment at 515-535 (VLLTCMSIMALLLLLLLLLLY) threads the bilayer. Topologically, residues 536-980 (KYKQKPKYQV…LLQPNNYQFC (445 aa)) are cytoplasmic. A regulatory juxtamembrane domain region spans residues 539-571 (QKPKYQVRWKIIESYEGNSYTFIDPTQLPYNEK). Tyr543 and Tyr558 each carry phosphotyrosine; by autocatalysis. The region spanning 579–908 (LQFGKTLGAG…PTFQQICSLL (330 aa)) is the Protein kinase domain. ATP-binding positions include 585-593 (LGAGAFGKV) and Lys613. A phosphotyrosine; by autocatalysis mark is found at Tyr696 and Tyr705. At Ser710 the chain carries Phosphoserine. Phosphotyrosine; by autocatalysis is present on Tyr720. Positions 723-743 (MRPVSTSSSNDSFSEEDLGKE) are disordered. Residue Asp776 is the Proton acceptor of the active site. An activation loop region spans residues 794 to 816 (DFGLARDIMNDSNYIVKGNARLP). 2 positions are modified to phosphotyrosine; by autocatalysis: Tyr807 and Tyr921. The disordered stretch occupies residues 918 to 959 (VPNYTNLPSSSSSSSSSSSSCRTGSGGGSSSEPEEESSSEHL). Residues 926–940 (SSSSSSSSSSSSCRT) show a composition bias toward low complexity. Tyr977 is subject to Phosphotyrosine; by autocatalysis.

This sequence belongs to the protein kinase superfamily. Tyr protein kinase family. CSF-1/PDGF receptor subfamily. As to quaternary structure, monomer. Homodimer. Interacts with CSF1 and IL34. Interaction with dimeric CSF1 or IL34 leads to receptor homodimerization. Interacts with INPPL1/SHIP2 and THOC5. Interacts (tyrosine phosphorylated) with PLCG2 (via SH2 domain). Interacts (tyrosine phosphorylated) with PIK3R1 (via SH2 domain). Interacts (tyrosine phosphorylated) with FYN, YES1 and SRC (via SH2 domain). Interacts (tyrosine phosphorylated) with CBL, GRB2 and SLA2. Autophosphorylated in response to CSF1 or IL34 binding. Phosphorylation at Tyr-558 is important for normal down-regulation of signaling by ubiquitination, internalization and degradation. Phosphorylation at Tyr-558 and Tyr-807 is important for interaction with SRC family members, including FYN, YES1 and SRC, and for subsequent activation of these protein kinases. Phosphorylation at Tyr-696 and Tyr-921 is important for interaction with GRB2. Phosphorylation at Tyr-720 is important for interaction with PIK3R1. Phosphorylation at Tyr-720 and Tyr-807 is important for interaction with PLCG2. Phosphorylation at Tyr-977 is important for interaction with CBL. Dephosphorylation by PTPN2 negatively regulates downstream signaling and macrophage differentiation. In terms of processing, ubiquitinated. Becomes rapidly polyubiquitinated after autophosphorylation, leading to its degradation.

It is found in the cell membrane. It catalyses the reaction L-tyrosyl-[protein] + ATP = O-phospho-L-tyrosyl-[protein] + ADP + H(+). With respect to regulation, present in an inactive conformation in the absence of bound ligand. CSF1 or IL34 binding leads to dimerization and activation by autophosphorylation on tyrosine residues. Functionally, tyrosine-protein kinase that acts as a cell-surface receptor for CSF1 and IL34 and plays an essential role in the regulation of survival, proliferation and differentiation of hematopoietic precursor cells, especially mononuclear phagocytes, such as macrophages and monocytes. Promotes the release of pro-inflammatory chemokines in response to IL34 and CSF1, and thereby plays an important role in innate immunity and in inflammatory processes. Plays an important role in the regulation of osteoclast proliferation and differentiation, the regulation of bone resorption, and is required for normal bone and tooth development. Required for normal male and female fertility, and for normal development of milk ducts and acinar structures in the mammary gland during pregnancy. Promotes reorganization of the actin cytoskeleton, regulates formation of membrane ruffles, cell adhesion and cell migration, and promotes cancer cell invasion. Activates several signaling pathways in response to ligand binding, including the ERK1/2 and the JNK pathway. Phosphorylates PIK3R1, PLCG2, GRB2, SLA2 and CBL. Activation of PLCG2 leads to the production of the cellular signaling molecules diacylglycerol and inositol 1,4,5-trisphosphate, that then lead to the activation of protein kinase C family members, especially PRKCD. Phosphorylation of PIK3R1, the regulatory subunit of phosphatidylinositol 3-kinase, leads to activation of the AKT1 signaling pathway. Activated CSF1R also mediates activation of the MAP kinases MAPK1/ERK2 and/or MAPK3/ERK1, and of the SRC family kinases SRC, FYN and YES1. Activated CSF1R transmits signals both via proteins that directly interact with phosphorylated tyrosine residues in its intracellular domain, or via adapter proteins, such as GRB2. Promotes activation of STAT family members STAT3, STAT5A and/or STAT5B. Promotes tyrosine phosphorylation of SHC1 and INPP5D/SHIP-1. Receptor signaling is down-regulated by protein phosphatases, such as INPP5D/SHIP-1, that dephosphorylate the receptor and its downstream effectors, and by rapid internalization of the activated receptor. In the central nervous system, may play a role in the development of microglia macrophages. This Felis catus (Cat) protein is Macrophage colony-stimulating factor 1 receptor (CSF1R).